The primary structure comprises 42 residues: Potassium channel gamma toxin gamma-KTx 1.9 (42 aa).

4 cysteine pairs are disulfide-bonded: Cys-5–Cys-23, Cys-11–Cys-34, Cys-20–Cys-39, and Cys-24–Cys-41.

This sequence belongs to the ergtoxin family. Gamma-KTx 1 subfamily. Expressed by the venom gland.

The protein localises to the secreted. Its function is as follows. Blocks human voltage-gated potassium channel Kv11.1/KCNH2/ERG1 (IC(50)=16.9 nM). This chain is Potassium channel gamma toxin gamma-KTx 1.9, found in Centruroides tecomanus (Scorpion).